A 99-amino-acid polypeptide reads, in one-letter code: Aspartyl/glutamyl-tRNA(Asn/Gln) amidotransferase subunit C (99 aa).

Belongs to the GatC family. Heterotrimer of A, B and C subunits.

The enzyme catalyses L-glutamyl-tRNA(Gln) + L-glutamine + ATP + H2O = L-glutaminyl-tRNA(Gln) + L-glutamate + ADP + phosphate + H(+). The catalysed reaction is L-aspartyl-tRNA(Asn) + L-glutamine + ATP + H2O = L-asparaginyl-tRNA(Asn) + L-glutamate + ADP + phosphate + 2 H(+). Allows the formation of correctly charged Asn-tRNA(Asn) or Gln-tRNA(Gln) through the transamidation of misacylated Asp-tRNA(Asn) or Glu-tRNA(Gln) in organisms which lack either or both of asparaginyl-tRNA or glutaminyl-tRNA synthetases. The reaction takes place in the presence of glutamine and ATP through an activated phospho-Asp-tRNA(Asn) or phospho-Glu-tRNA(Gln). The polypeptide is Aspartyl/glutamyl-tRNA(Asn/Gln) amidotransferase subunit C (Variovorax paradoxus (strain S110)).